The primary structure comprises 397 residues: MHKIMAINAGSSSLKFQIFTMPGEEVLVKGLIERIGLPDAIFNMSFQNEKIKEIRAINNHGEAVEILLEQLKAHQVINDLSEITGVGHRVAHGGEDFVTSCVVTDEVVKGIEAVTNLAPLHNPANIIGIKTFRELLPNAVSVAVFDTAFHQTIPEENFLYALPYELYEKHHIRKYGFHGTSHKYVAGKAAEVLEKPLEKLKIISCHLGNGASVCAIEAGKSVNTSMGFTPNAGLMMGTRSGTIDATIIPYLVDELGYSLDEVMHMMSSESGVLGVSGISSDFRDIEIAAKEGNSRALLTLRMFTGQICNYIGAYASAMNGCDALLFTAGVGENSPLIRQMVTEQLSYLGVTCHVTKNNAGDMIISNDDEAVKVCIIPTNEELMIARDVEKYAKQTIS.

Asn8 lines the Mg(2+) pocket. Lys15 lines the ATP pocket. Residue Arg89 participates in substrate binding. Catalysis depends on Asp146, which acts as the Proton donor/acceptor. ATP is bound by residues 206 to 210 (HLGNG), 281 to 283 (DFR), and 329 to 333 (GVGEN). Mg(2+) is bound at residue Glu380.

It belongs to the acetokinase family. Homodimer. Mg(2+) serves as cofactor. Mn(2+) is required as a cofactor.

The protein resides in the cytoplasm. It catalyses the reaction acetate + ATP = acetyl phosphate + ADP. The protein operates within metabolic intermediate biosynthesis; acetyl-CoA biosynthesis; acetyl-CoA from acetate: step 1/2. Catalyzes the formation of acetyl phosphate from acetate and ATP. Can also catalyze the reverse reaction. This chain is Acetate kinase 1, found in Listeria monocytogenes serotype 4b (strain F2365).